A 346-amino-acid chain; its full sequence is Methylthioribose-1-phosphate isomerase (346 aa).

Residues arginine 46–alanine 48, arginine 89, and glutamine 196 each bind substrate. Residue aspartate 237 is the Proton donor of the active site. Asparagine 247 to lysine 248 is a binding site for substrate.

It belongs to the eIF-2B alpha/beta/delta subunits family. MtnA subfamily.

It carries out the reaction 5-(methylsulfanyl)-alpha-D-ribose 1-phosphate = 5-(methylsulfanyl)-D-ribulose 1-phosphate. It participates in amino-acid biosynthesis; L-methionine biosynthesis via salvage pathway; L-methionine from S-methyl-5-thio-alpha-D-ribose 1-phosphate: step 1/6. Catalyzes the interconversion of methylthioribose-1-phosphate (MTR-1-P) into methylthioribulose-1-phosphate (MTRu-1-P). The sequence is that of Methylthioribose-1-phosphate isomerase from Geobacter sulfurreducens (strain ATCC 51573 / DSM 12127 / PCA).